The primary structure comprises 22 residues: NADH-ubiquinone oxidoreductase 16 kDa subunit (22 aa).

As to quaternary structure, complex I is composed of about 45 different subunits.

It localises to the mitochondrion inner membrane. It carries out the reaction a ubiquinone + NADH + 5 H(+)(in) = a ubiquinol + NAD(+) + 4 H(+)(out). Functionally, transfer of electrons from NADH to the respiratory chain. The immediate electron acceptor for the enzyme is believed to be ubiquinone. In Solanum tuberosum (Potato), this protein is NADH-ubiquinone oxidoreductase 16 kDa subunit.